The chain runs to 477 residues: Alkaline phosphatase (477 aa).

A Mg(2+)-binding site is contributed by Asp44. Asp44 serves as a coordination point for Zn(2+). Residue Ser94 is the Phosphoserine intermediate of the active site. Asn124 is a glycosylation site (N-linked (GlcNAc...) asparagine). Mg(2+)-binding residues include His155 and Thr157. Cys165 and Cys185 are disulfide-bonded. N-linked (GlcNAc...) asparagine glycosylation is present at Asn214. Glu315 contacts Mg(2+). Zn(2+) contacts are provided by Asp320, His324, Asp361, and His362. A glycan (N-linked (GlcNAc...) asparagine) is linked at Asn413. His437 provides a ligand contact to Zn(2+).

As to quaternary structure, homodimer. Mg(2+) serves as cofactor. Requires Zn(2+) as cofactor.

The protein resides in the cell membrane. The enzyme catalyses a phosphate monoester + H2O = an alcohol + phosphate. This Gadus morhua (Atlantic cod) protein is Alkaline phosphatase.